The following is a 2009-amino-acid chain: Sodium channel protein type 1 subunit alpha (2009 aa).

Residues 1–128 (MEQTVLVPPG…KIAIKILVHS (128 aa)) lie on the Cytoplasmic side of the membrane. Positions 28-48 (RIAEEKAKNPKPDKKDDDENG) are enriched in basic and acidic residues. A disordered region spans residues 28–60 (RIAEEKAKNPKPDKKDDDENGPKPNSDLEAGKN). One copy of the I repeat lies at 110 to 454 (ILTPFNPLRK…QQMLEQLKKQ (345 aa)). A helical transmembrane segment spans residues 129–146 (LFSMLIMCTILTNCVFMT). The Extracellular portion of the chain corresponds to 147 to 152 (MSNPPD). A helical transmembrane segment spans residues 153 to 177 (WTKNVEYTFTGIYTFESLIKIIARG). The Cytoplasmic segment spans residues 178–188 (FCLEDFTFLRD). Residues 189-205 (PWNWLDFTVITFAYVTE) traverse the membrane as a helical segment. Over 206 to 213 (FVDLGNVS) the chain is Extracellular. N211 is a glycosylation site (N-linked (GlcNAc...) asparagine). A helical membrane pass occupies residues 214-235 (ALRTFRVLRALKTISVIPGLKT). The Cytoplasmic segment spans residues 236–245 (IVGALIQSVK). A helical membrane pass occupies residues 246-269 (KLSDVMILTVFCLSVFALIGLQLF). Residues 270-369 (MGNLRNKCVQ…YGYTSFDTFS (100 aa)) are Extracellular-facing. Intrachain disulfides connect C277/C345 and C336/C351. 5 N-linked (GlcNAc...) asparagine glycosylation sites follow: N284, N295, N301, N306, and N338. The pore-forming intramembrane region spans 370 to 384 (WAFLSLFRLMTQDFW). Residues 385 to 397 (ENLYQLTLRAAGK) lie on the Extracellular side of the membrane. The helical transmembrane segment at 398–423 (TYMIFFVLVIFLGSFYLINLILAVVA) threads the bilayer. Over 424 to 768 (MAYEEQNQAT…HIVNLVVMDP (345 aa)) the chain is Cytoplasmic. The tract at residues 458–528 (AQQAAAATAS…EFHKSESEDS (71 aa)) is disordered. S470 is modified (phosphoserine). Residues 479–492 (LSDSSSEASKLSSK) show a composition bias toward low complexity. Basic residues predominate over residues 495 to 506 (KERRNRRKKRKQ). The span at 507–528 (KEQSGGEEKDDDEFHKSESEDS) shows a compositional bias: basic and acidic residues. S523, S525, S550, S551, S607, and S730 each carry phosphoserine. The tract at residues 584-628 (VGSENDFADDEHSTFEDNESRRDSLFVPRRHGERRNSNLSQTSRS) is disordered. Over residues 593-607 (DEHSTFEDNESRRDS) the composition is skewed to basic and acidic residues. One copy of the II repeat lies at 750–1022 (CSPYWLKVKH…QIAVDRMHKG (273 aa)). The chain crosses the membrane as a helical span at residues 769–787 (FVDLAITICIVLNTLFMAM). The Extracellular segment spans residues 788–797 (EHYPMTEHFN). Residues 798 to 820 (HVLTVGNLVFTGIFTAEMFLKII) traverse the membrane as a helical segment. The Cytoplasmic segment spans residues 821 to 830 (AMDPYYYFQE). Residues 831 to 849 (GWNIFDGFIVTLSLVELGL) traverse the membrane as a helical segment. Over 850–854 (ANVEG) the chain is Extracellular. A helical membrane pass occupies residues 855 to 874 (LSVLRSFRLLRVFKLAKSWP). The Cytoplasmic segment spans residues 875–891 (TLNMLIKIIGNSVGALG). The helical transmembrane segment at 892-912 (NLTLVLAIIVFIFAVVGMQLF) threads the bilayer. Topologically, residues 913 to 938 (GKSYKDCVCKIATDCKLPRWHMNDFF) are extracellular. Cysteines 921 and 927 form a disulfide. The pore-forming intramembrane region spans 939-952 (HSFLIVFRVLCGEW). Over 953–965 (IETMWDCMEVAGQ) the chain is Extracellular. C959 and C968 form a disulfide bridge. Residues 966-992 (AMCLTVFMMVMVIRNLVVLNLFLALLL) form a helical membrane-spanning segment. At 993-1218 (SSFSADNLAA…RTCFRIVEHN (226 aa)) the chain is on the cytoplasmic side. The segment at 1129–1163 (TEDFSSESDLEESKEKLNESSSSSEGSTVDIGAPA) is disordered. The III repeat unit spans residues 1200–1514 (RGKQWWNLRR…KKYYNAMKKL (315 aa)). Residues 1219–1237 (WFETFIVFMILLSSGALAF) form a helical membrane-spanning segment. Over 1238–1250 (EDIYIDQRKTIKT) the chain is Extracellular. The helical transmembrane segment at 1251–1276 (MLEYADKVFTYIFILEMLLKWVAYGY) threads the bilayer. Residues 1277–1278 (QT) lie on the Cytoplasmic side of the membrane. A helical transmembrane segment spans residues 1279–1304 (YFTNAWCWLDFLIVDVSLVSLTANAL). At 1305-1313 (GYSELGAIK) the chain is on the extracellular side. Residues 1314–1332 (SLRTLRALRPLRALSRFEG) form a helical membrane-spanning segment. Over 1333–1345 (MRVVVNALLGAIP) the chain is Cytoplasmic. A helical transmembrane segment spans residues 1346–1369 (SIMNVLLVCLIFWLIFSIMGVNLF). Over 1370–1415 (AGKFYHCVNTTTGDTFEITEVNNHSDCLKLIERNETARWKNVKVNF) the chain is Extracellular. An intrachain disulfide couples C1376 to C1396. Residues N1378, N1392, and N1403 are each glycosylated (N-linked (GlcNAc...) asparagine). Residues 1416 to 1433 (DNVGFGYLSLLQVATFKG) constitute an intramembrane region (pore-forming). The Extracellular segment spans residues 1434–1457 (WMDIMYAAVDSRNVELQPKYEESL). A helical transmembrane segment spans residues 1458 to 1483 (YMYLYFVIFIIFGSFFTLNLFIGVII). The Cytoplasmic segment spans residues 1484-1541 (DNFNQQKKKFGGQDIFMTEEQKKYYNAMKKLGSKKPQKPIPRPGNKFQGMVFDFVTRQ). S1516 is modified (phosphoserine; by PKC). The IV repeat unit spans residues 1523–1821 (IPRPGNKFQG…WEKFDPDATQ (299 aa)). A helical transmembrane segment spans residues 1542-1560 (VFDISIMILICLNMVTMMV). The Extracellular segment spans residues 1561-1571 (ETDDQSDYVTS). Positions 1561 to 1571 (ETDDQSDYVTS) are S1-S2 loop of repeat IV. The helical transmembrane segment at 1572–1593 (ILSRINLVFIVLFTGECVLKLI) threads the bilayer. Over 1594 to 1601 (SLRHYYFT) the chain is Cytoplasmic. A helical transmembrane segment spans residues 1602–1623 (IGWNIFDFVVVILSIVGMFLAE). The segment at 1619–1636 (MFLAELIEKYFVSPTLFR) is S3b-S4 loop of repeat IV. The Extracellular portion of the chain corresponds to 1624–1636 (LIEKYFVSPTLFR). A helical membrane pass occupies residues 1637-1655 (VIRLARIGRILRLIKGAKG). At 1656-1665 (IRTLLFALMM) the chain is on the cytoplasmic side. The helical transmembrane segment at 1666 to 1688 (SLPALFNIGLLLFLVMFIYAIFG) threads the bilayer. Over 1689–1711 (MSNFAYVKREVGIDDMFNFETFG) the chain is Extracellular. An intramembrane region (pore-forming) is located at residues 1712-1726 (NSMICLFQITTSAGW). At 1727 to 1759 (DGLLAPILNSKPPDCDPNKVNPGSSVKGDCGNP) the chain is on the extracellular side. Cysteines 1741 and 1756 form a disulfide. Residues 1760-1788 (SVGIFFFVSYIIISFLVVVNMYIAVILEN) traverse the membrane as a helical segment. At 1789-2009 (FSVATEESAE…EGKDEKAKGK (221 aa)) the chain is on the cytoplasmic side. An IQ domain is found at 1915 to 1944 (EEVSAVIIQRAYRRHLLKRTVKQASFTYNK). A disordered region spans residues 1986–2009 (YDRVTKPIVEKHEQEGKDEKAKGK). Positions 1988 to 2009 (RVTKPIVEKHEQEGKDEKAKGK) are enriched in basic and acidic residues.

This sequence belongs to the sodium channel (TC 1.A.1.10) family. Nav1.1/SCN1A subfamily. In terms of assembly, the Nav1.1 voltage-gated sodium channel consists of an ion-conducting alpha subunit SCN1A which is functional on its own regulated by one or more beta-1 (SCN1B), beta-2 (SCN2B), beta-3 (SCN3B) and beta-4 (SCN4B) subunits. SCN1B and SCN3B are non-covalently associated with SCN1A. SCN2B and SCN4B are disulfide-linked to SCN1A. SCN1B regulates both the expression at the plasma membrane and the voltage dependence of Nav1.1 inactivation. SCN3B and SCN4B reduce Nav1.1 conductance. Probably interacts with TMEM233; modulates the gating properties of NaV1.1. Interacts with FGF13; regulates the steady-state inactivation of Nav.1.1. Phosphorylation at Ser-1516 by PKC in a highly conserved cytoplasmic loop slows inactivation of the sodium channel and reduces peak sodium currents.

It localises to the cell membrane. The enzyme catalyses Na(+)(in) = Na(+)(out). Activated by the spider toxins Hm1a and Hm1b (H.maculata, AC P60992 and AC P0DOC5) eliciting acute pain and mechanical allodynia. Inhibited by the conotoxin GVIIJ. Functionally, pore-forming subunit of Nav1.1, a voltage-gated sodium (Nav) channel that directly mediates the depolarizing phase of action potentials in excitable membranes. Navs, also called VGSCs (voltage-gated sodium channels) or VDSCs (voltage-dependent sodium channels), operate by switching between closed and open conformations depending on the voltage difference across the membrane. In the open conformation they allow Na(+) ions to selectively pass through the pore, along their electrochemical gradient. The influx of Na(+) ions provokes membrane depolarization, initiating the propagation of electrical signals throughout cells and tissues. By regulating the excitability of neurons, ensures that they respond appropriately to synaptic inputs, maintaining the balance between excitation and inhibition in brain neural circuits. Nav1.1 plays a role in controlling the excitability and action potential propagation from somatosensory neurons, thereby contributing to the sensory perception of mechanically-induced pain. This Rattus norvegicus (Rat) protein is Sodium channel protein type 1 subunit alpha.